The primary structure comprises 289 residues: Shikimate kinase (289 aa).

84–94 (PMASGLSSSSA) provides a ligand contact to ATP.

Belongs to the GHMP kinase family. Archaeal shikimate kinase subfamily.

The protein localises to the cytoplasm. The enzyme catalyses shikimate + ATP = 3-phosphoshikimate + ADP + H(+). The protein operates within metabolic intermediate biosynthesis; chorismate biosynthesis; chorismate from D-erythrose 4-phosphate and phosphoenolpyruvate: step 5/7. The sequence is that of Shikimate kinase from Methanobrevibacter smithii (strain ATCC 35061 / DSM 861 / OCM 144 / PS).